Consider the following 510-residue polypeptide: Catalase (510 aa).

The N-terminal stretch at 1–26 (MPLLNWSRHMVCLTAAGLITVPTVYA) is a signal peptide. Catalysis depends on residues H78 and N150. Residue Y358 participates in heme binding. Positions 386-400 (NQDGALNTGHTTSGV) are enriched in polar residues. The segment at 386–412 (NQDGALNTGHTTSGVNYEPSRLEPRPA) is disordered.

This sequence belongs to the catalase family. Heme is required as a cofactor.

It localises to the periplasm. It catalyses the reaction 2 H2O2 = O2 + 2 H2O. Decomposes hydrogen peroxide into water and oxygen; serves to protect cells from the toxic effects of hydrogen peroxide. The sequence is that of Catalase (katB) from Pseudomonas syringae pv. syringae.